A 522-amino-acid chain; its full sequence is DEAD-box ATP-dependent RNA helicase 1 (522 aa).

The short motif at 30-59 (CALDTLPCLNPKLKKALENMGISSLFPVQV) is the Q motif element. Positions 66–297 (IGPGGFERDI…QLDLHHPLFM (232 aa)) constitute a Helicase ATP-binding domain. Residue 79–86 (SPTGSGKT) coordinates ATP. The DEAD box motif lies at 207–210 (DETD). Positions 325-475 (YLVALLKSWE…PIPPTSLDSI (151 aa)) constitute a Helicase C-terminal domain. Residues 490–522 (VESEAPKKGRQAFRHNSRTGNSQTKLNKPRSEA) are disordered. Residues 497 to 506 (KGRQAFRHNS) show a composition bias toward basic residues.

Belongs to the DEAD box helicase family. DDX51/DBP6 subfamily.

The catalysed reaction is ATP + H2O = ADP + phosphate + H(+). This Arabidopsis thaliana (Mouse-ear cress) protein is DEAD-box ATP-dependent RNA helicase 1 (RH1).